A 176-amino-acid polypeptide reads, in one-letter code: Nascent polypeptide-associated complex subunit alpha (176 aa).

The 65-residue stretch at Ser14–Leu78 folds into the NAC-A/B domain. The segment at Leu85–Val127 is disordered. Residues Leu137 to Gly176 enclose the UBA domain.

This sequence belongs to the NAC-alpha family. Part of the nascent polypeptide-associated complex (NAC), consisting of EGD2 and EGD1. NAC associates with ribosomes via EGD1.

Its subcellular location is the cytoplasm. It is found in the nucleus. In terms of biological role, component of the nascent polypeptide-associated complex (NAC), a dynamic component of the ribosomal exit tunnel, protecting the emerging polypeptides from interaction with other cytoplasmic proteins to ensure appropriate nascent protein targeting. The NAC complex also promotes mitochondrial protein import by enhancing productive ribosome interactions with the outer mitochondrial membrane and blocks the inappropriate interaction of ribosomes translating non-secretory nascent polypeptides with translocation sites in the membrane of the endoplasmic reticulum. EGD2 may also be involved in transcription regulation. This is Nascent polypeptide-associated complex subunit alpha (EGD2) from Kluyveromyces lactis (strain ATCC 8585 / CBS 2359 / DSM 70799 / NBRC 1267 / NRRL Y-1140 / WM37) (Yeast).